We begin with the raw amino-acid sequence, 262 residues long: Sugar fermentation stimulation protein homolog (262 aa).

Belongs to the SfsA family.

This Lawsonia intracellularis (strain PHE/MN1-00) protein is Sugar fermentation stimulation protein homolog.